We begin with the raw amino-acid sequence, 655 residues long: Proprotein convertase subtilisin/kexin type 4 (655 aa).

The signal sequence occupies residues 1 to 26; sequence MRPSQTELWLGLTLTLALLAVRWASA. Positions 27–110 are excised as a propeptide; the sequence is QAPIYVSSWA…QQTLRRRVKR (84 aa). The Peptidase S8 domain occupies 123 to 437; the sequence is QWYMNKEIQQ…YGLLDAGLLV (315 aa). Active-site charge relay system residues include D155, H196, and S370. Positions 446–580 constitute a P/Homo B domain; that stretch reads TKPQKKCAIR…TLLLYGTAED (135 aa). A glycan (N-linked (GlcNAc...) asparagine) is linked at N472.

The protein belongs to the peptidase S8 family. Furin subfamily. As to quaternary structure, the proPCSK4 form interacts with HSPA5; the interaction takes place at the endoplasmic reticulum. Post-translationally, N-glycosylated. In terms of processing, synthesized in the endoplasmic reticulum as a zymogen, is matured by autocatalytic cleavage between the prodomain and the catalytic domain. As to expression, expressed abundantly in the testis since postnatal Day 16. In testis, strongly detected in round and elongated spermatids as well as spermatocytes. Also observed in residual bodies engulfed by Sertoli cells at spermatogenic stages VIII and IX. In ovaries, expressed in macrophage-like cells of the ovarian theca, interstitium and corpora lutea.

Its subcellular location is the cytoplasmic vesicle. The protein localises to the secretory vesicle. The protein resides in the acrosome membrane. Functionally, proprotein convertase involved in the processing of hormone and other protein precursors at sites comprised of pairs of basic amino acid residues. In males, important for ADAM2 processing as well as other acrosomal proteins with roles in fertilization and critical for normal fertilization events such as sperm capacitation, acrosome reaction and binding of sperm to zona pellucida. Also plays a role in female fertility, involved in the regulation of trophoblast migration and placental development, may be through the proteolytical processing and activation of proteins such as IGF2. May also participate in folliculogenesis in the ovaries. The protein is Proprotein convertase subtilisin/kexin type 4 (Pcsk4) of Mus musculus (Mouse).